Reading from the N-terminus, the 189-residue chain is Peptidyl-tRNA hydrolase (189 aa).

Residue Tyr17 coordinates tRNA. His22 serves as the catalytic Proton acceptor. TRNA is bound by residues Phe65, Asn67, and Asn113.

The protein belongs to the PTH family. As to quaternary structure, monomer.

The protein resides in the cytoplasm. It catalyses the reaction an N-acyl-L-alpha-aminoacyl-tRNA + H2O = an N-acyl-L-amino acid + a tRNA + H(+). Hydrolyzes ribosome-free peptidyl-tRNAs (with 1 or more amino acids incorporated), which drop off the ribosome during protein synthesis, or as a result of ribosome stalling. Functionally, catalyzes the release of premature peptidyl moieties from peptidyl-tRNA molecules trapped in stalled 50S ribosomal subunits, and thus maintains levels of free tRNAs and 50S ribosomes. This is Peptidyl-tRNA hydrolase from Mycoplasma genitalium (strain ATCC 33530 / DSM 19775 / NCTC 10195 / G37) (Mycoplasmoides genitalium).